We begin with the raw amino-acid sequence, 255 residues long: Acetylglutamate kinase (255 aa).

Substrate-binding positions include 40-41, Arg-62, and Asn-153; that span reads GG.

This sequence belongs to the acetylglutamate kinase family. ArgB subfamily.

The protein resides in the cytoplasm. It carries out the reaction N-acetyl-L-glutamate + ATP = N-acetyl-L-glutamyl 5-phosphate + ADP. The protein operates within amino-acid biosynthesis; L-arginine biosynthesis; N(2)-acetyl-L-ornithine from L-glutamate: step 2/4. In terms of biological role, catalyzes the ATP-dependent phosphorylation of N-acetyl-L-glutamate. In Bacillus anthracis (strain A0248), this protein is Acetylglutamate kinase.